The sequence spans 344 residues: Melanocyte-stimulating hormone receptor (344 aa).

Topologically, residues M1–E37 are extracellular. An N-linked (GlcNAc...) asparagine glycan is attached at N29. A helical transmembrane segment spans residues V38 to I63. Topologically, residues A64–S72 are cytoplasmic. The chain crosses the membrane as a helical span at residues M73–L93. Residues E94–N118 lie on the Extracellular side of the membrane. Residues T119–V140 traverse the membrane as a helical segment. Over D141–R163 the chain is Cytoplasmic. Residues A164–Y183 form a helical membrane-spanning segment. Topologically, residues D184–C191 are extracellular. Residues L192–L211 traverse the membrane as a helical segment. At A212–A240 the chain is on the cytoplasmic side. A helical membrane pass occupies residues A241–F266. Residues C267–N279 lie on the Extracellular side of the membrane. The chain crosses the membrane as a helical span at residues F280–F300. At R301–P344 the chain is on the cytoplasmic side. C315 carries S-palmitoyl cysteine lipidation.

Belongs to the G-protein coupled receptor 1 family. In terms of assembly, interacts with MGRN1, but does not undergo MGRN1-mediated ubiquitination; this interaction competes with GNAS-binding and thus inhibits agonist-induced cAMP production. Interacts with OPN3; the interaction results in a decrease in MC1R-mediated cAMP signaling and ultimately a decrease in melanin production in melanocytes.

It is found in the cell membrane. In terms of biological role, receptor for MSH (alpha, beta and gamma) and ACTH. The activity of this receptor is mediated by G proteins which activate adenylate cyclase. Mediates melanogenesis, the production of eumelanin (black/brown) and phaeomelanin (red/yellow), via regulation of cAMP signaling in melanocytes. The chain is Melanocyte-stimulating hormone receptor (MC1R) from Callithrix jacchus (White-tufted-ear marmoset).